The chain runs to 355 residues: Anthranilate phosphoribosyltransferase (355 aa).

5-phospho-alpha-D-ribose 1-diphosphate contacts are provided by residues Gly91, 94-95 (GD), Thr99, 101-104 (NIST), 119-127 (KHGNRAMSS), and Ala131. Gly91 provides a ligand contact to anthranilate. Ser103 is a Mg(2+) binding site. Position 122 (Asn122) interacts with anthranilate. Arg177 provides a ligand contact to anthranilate. Mg(2+) is bound by residues Asp234 and Glu235.

This sequence belongs to the anthranilate phosphoribosyltransferase family. Homodimer. Requires Mg(2+) as cofactor.

It carries out the reaction N-(5-phospho-beta-D-ribosyl)anthranilate + diphosphate = 5-phospho-alpha-D-ribose 1-diphosphate + anthranilate. Its pathway is amino-acid biosynthesis; L-tryptophan biosynthesis; L-tryptophan from chorismate: step 2/5. In terms of biological role, participates in the tryptophan-dependent indole-3-acetic acid production, which is a phytohormone released by A.brasilense. Functionally, catalyzes the transfer of the phosphoribosyl group of 5-phosphorylribose-1-pyrophosphate (PRPP) to anthranilate to yield N-(5'-phosphoribosyl)-anthranilate (PRA). The sequence is that of Anthranilate phosphoribosyltransferase from Azospirillum brasilense.